A 344-amino-acid polypeptide reads, in one-letter code: Putative cyclin-Y-like protein 3 (344 aa).

The Cyclin N-terminal domain occupies 40 to 170; the sequence is ERYANRSLAI…FLELLEFNIH (131 aa).

It belongs to the cyclin family. Cyclin Y subfamily.

In Homo sapiens (Human), this protein is Putative cyclin-Y-like protein 3 (CCNYL3).